We begin with the raw amino-acid sequence, 82 residues long: Protein ImpC (82 aa).

Belongs to the DinI family.

Its function is as follows. The imp operon is involved in UV protection and mutation, however the ImpC protein is not essential for these functions. The chain is Protein ImpC (impC) from Salmonella typhimurium.